A 68-amino-acid chain; its full sequence is DNA-directed RNA polymerase subunit omega (68 aa).

The protein belongs to the RNA polymerase subunit omega family. In terms of assembly, the RNAP catalytic core consists of 2 alpha, 1 beta, 1 beta' and 1 omega subunit. When a sigma factor is associated with the core the holoenzyme is formed, which can initiate transcription.

The catalysed reaction is RNA(n) + a ribonucleoside 5'-triphosphate = RNA(n+1) + diphosphate. Functionally, promotes RNA polymerase assembly. Latches the N- and C-terminal regions of the beta' subunit thereby facilitating its interaction with the beta and alpha subunits. The sequence is that of DNA-directed RNA polymerase subunit omega from Neisseria meningitidis serogroup C (strain 053442).